We begin with the raw amino-acid sequence, 103 residues long: Large ribosomal subunit protein bL21 (103 aa).

It belongs to the bacterial ribosomal protein bL21 family. In terms of assembly, part of the 50S ribosomal subunit. Contacts protein L20.

Its function is as follows. This protein binds to 23S rRNA in the presence of protein L20. The polypeptide is Large ribosomal subunit protein bL21 (Mycobacterium tuberculosis (strain ATCC 25618 / H37Rv)).